The sequence spans 251 residues: Small ribosomal subunit protein uS2 (251 aa).

The interval 232–251 (LQTGEEEMAAAEGESEQVEA) is disordered. The segment covering 235–251 (GEEEMAAAEGESEQVEA) has biased composition (acidic residues).

Belongs to the universal ribosomal protein uS2 family.

This Geobacter metallireducens (strain ATCC 53774 / DSM 7210 / GS-15) protein is Small ribosomal subunit protein uS2.